A 369-amino-acid polypeptide reads, in one-letter code: Type 2 DNA topoisomerase 6 subunit A (369 aa).

Residues 10 to 146 (KPREIAKQKI…LGFIPEEDGS (137 aa)) form the Topo IIA-type catalytic domain. Y103 serves as the catalytic O-(5'-phospho-DNA)-tyrosine intermediate. E197 and D249 together coordinate Mg(2+).

This sequence belongs to the TOP6A family. As to quaternary structure, homodimer. Heterotetramer of two Top6A and two Top6B chains. Requires Mg(2+) as cofactor.

The catalysed reaction is ATP-dependent breakage, passage and rejoining of double-stranded DNA.. Relaxes both positive and negative superturns and exhibits a strong decatenase activity. This Methanocaldococcus jannaschii (strain ATCC 43067 / DSM 2661 / JAL-1 / JCM 10045 / NBRC 100440) (Methanococcus jannaschii) protein is Type 2 DNA topoisomerase 6 subunit A.